We begin with the raw amino-acid sequence, 119 residues long: Large ribosomal subunit protein uL18 (119 aa).

Belongs to the universal ribosomal protein uL18 family. As to quaternary structure, part of the 50S ribosomal subunit; part of the 5S rRNA/L5/L18/L25 subcomplex. Contacts the 5S and 23S rRNAs.

This is one of the proteins that bind and probably mediate the attachment of the 5S RNA into the large ribosomal subunit, where it forms part of the central protuberance. The chain is Large ribosomal subunit protein uL18 from Anaeromyxobacter sp. (strain Fw109-5).